We begin with the raw amino-acid sequence, 444 residues long: Type VII secretion system protein EssB (444 aa).

Topologically, residues 1–229 are cytoplasmic; that stretch reads MVKNHDPKNE…RKVGHTVFKW (229 aa). A helical membrane pass occupies residues 230 to 250; that stretch reads VAIGMTTLSVLLIAFLAFLYF. The Extracellular segment spans residues 251 to 444; that stretch reads SVMKHNERIE…EKRQEAERKK (194 aa). The interval 366-444 is disordered; that stretch reads KNNGDLSNDK…EKRQEAERKK (79 aa). Residues 372–444 show a composition bias toward basic and acidic residues; sequence SNDKRSEETK…EKRQEAERKK (73 aa). The stretch at 387 to 443 forms a coiled coil; it reads LQDILDKEKQVKDEKAKSEEEKAKAKDEKLKQQEENEKKQKEQAQKDKEKRQEAERK.

It belongs to the EssB family.

The protein resides in the cell membrane. Component of the type VII secretion system (Ess). Required for the secretion of EsxA. This is Type VII secretion system protein EssB from Staphylococcus aureus (strain MRSA252).